The chain runs to 37 residues: Large ribosomal subunit protein bL36 (37 aa).

Belongs to the bacterial ribosomal protein bL36 family.

This is Large ribosomal subunit protein bL36 from Staphylococcus aureus (strain Mu3 / ATCC 700698).